The following is a 293-amino-acid chain: Small ribosomal subunit protein uS2 (293 aa).

The disordered stretch occupies residues 219 to 293 (IASAKPDEPY…WATPKTEDWA (75 aa)).

It belongs to the universal ribosomal protein uS2 family. In terms of assembly, component of the small ribosomal subunit. Mature ribosomes consist of a small (40S) and a large (60S) subunit. The 40S subunit contains about 33 different proteins and 1 molecule of RNA (18S). The 60S subunit contains about 49 different proteins and 3 molecules of RNA (28S, 5.8S and 5S). Interacts with ribosomal protein S21.

It is found in the cytoplasm. Its function is as follows. Required for the assembly and/or stability of the 40S ribosomal subunit. Required for the processing of the 20S rRNA-precursor to mature 18S rRNA in a late step of the maturation of 40S ribosomal subunits. This Hydra viridissima (Green hydra) protein is Small ribosomal subunit protein uS2.